The sequence spans 82 residues: Small ribosomal subunit protein eS27 (82 aa).

A C4-type zinc finger spans residues cysteine 37–cysteine 59.

The protein belongs to the eukaryotic ribosomal protein eS27 family. Component of the small ribosomal subunit (SSU). Mature N.crassa ribosomes consist of a small (40S) and a large (60S) subunit. The 40S small subunit contains 1 molecule of ribosomal RNA (18S rRNA) and at least 32 different proteins. The large 60S subunit contains 3 rRNA molecules (26S, 5.8S and 5S rRNA) and at least 42 different proteins. The cofactor is Zn(2+).

The protein resides in the cytoplasm. Its function is as follows. Component of the ribosome, a large ribonucleoprotein complex responsible for the synthesis of proteins in the cell. The small ribosomal subunit (SSU) binds messenger RNAs (mRNAs) and translates the encoded message by selecting cognate aminoacyl-transfer RNA (tRNA) molecules. The large subunit (LSU) contains the ribosomal catalytic site termed the peptidyl transferase center (PTC), which catalyzes the formation of peptide bonds, thereby polymerizing the amino acids delivered by tRNAs into a polypeptide chain. The nascent polypeptides leave the ribosome through a tunnel in the LSU and interact with protein factors that function in enzymatic processing, targeting, and the membrane insertion of nascent chains at the exit of the ribosomal tunnel. The protein is Small ribosomal subunit protein eS27 (crp-6) of Neurospora crassa (strain ATCC 24698 / 74-OR23-1A / CBS 708.71 / DSM 1257 / FGSC 987).